A 636-amino-acid polypeptide reads, in one-letter code: MGKVVGIDLGTTNSCVAVMEGGKPTVIANAEGFRTTPSVVGYAKNGDRLVGQIAKRQAVMNPGNTFYSVKRFIGRKFDEITNEATEVAYSVVKDGNGNVKLDCPAQGKQFAPEEISAQVLRKLVDDASKYLGETVTQAVITVPAYFNDSQRQATKDAGKIAGIEVLRIINEPTAASLAYGLDKKDNETILVFDLGGGTFDVSILEVGEGVFEVLATSGDTHLGGDDFDKKIVDFLAGEFQKAEGIDLRKDKQALQRLTEAAEKAKIELSGVSQTEINLPFITATQDGPKHLDTTLSRAKFEEICSDLIDRCGIPVENAIRDAKIDKSALDEIVLVGGSTRIPAVQEVVKKILGKDPNQGVNPDEVVAVGAAIQGGVLSGEVKDILLLDVSPLSLGVETLGGVMTKIIPRNTTIPTKKSETFSTAVDGQSNVEIHVLQGEREMANDNKSLGTFRLDGIPPAPRGVPQIEVTFDIDANGILNVTAKDRGTGKEQSISITGASTLPDTEVDRMVKEAESNAAADKERREKIDRKNQADSLVYQAEKQITELGDKVPAADKIKAEGLIKDLKEAVAQEDDAKIQTVMPELQQVLYSIGSNMYQQAGAEAGVGAPGAGPEAGTSSGGGDDVIDAEFSEPEK.

The residue at position 198 (threonine 198) is a Phosphothreonine; by autocatalysis. Residues 604–618 (EAGVGAPGAGPEAGT) are compositionally biased toward low complexity. Positions 604 to 636 (EAGVGAPGAGPEAGTSSGGGDDVIDAEFSEPEK) are disordered. Over residues 625-636 (DVIDAEFSEPEK) the composition is skewed to acidic residues.

The protein belongs to the heat shock protein 70 family.

Acts as a chaperone. The polypeptide is Chaperone protein DnaK2 (dnaK2) (Synechocystis sp. (strain ATCC 27184 / PCC 6803 / Kazusa)).